We begin with the raw amino-acid sequence, 468 residues long: Plant UBX domain-containing protein 7 (468 aa).

Met-1 carries the N-acetylmethionine modification. Residues 7-48 (SGDQQRLVSSFLEIAVGQTAETARQFLQATSWKLEEAIQLFY) enclose the UBA-like domain. Disordered stretches follow at residues 138–168 (KSPG…SAPR) and 299–329 (HFAS…KDEE). Low complexity predominate over residues 150-166 (SSASASASASASESASA). In terms of domain architecture, UIM spans 328 to 347 (EEEEELQRALAASLEDNNMK). Residues 385 to 466 (DRSLQCRVGI…GVANSMISAT (82 aa)) enclose the UBX domain.

As to quaternary structure, interacts with CDC48A via its UBX domain and with ubiquitin via its N-terminal UBA-like domain. Expressed broadly in sporophyte and gametophyte cells.

The protein resides in the nucleus. Functionally, acts as a bridge between CDC48A and ubiquitin, suggesting a role in targeted protein degradation. In Arabidopsis thaliana (Mouse-ear cress), this protein is Plant UBX domain-containing protein 7.